The primary structure comprises 1077 residues: Carbamoyl phosphate synthase large chain (1077 aa).

Residues 1–403 (MPKRTDIQSI…SLHKALRGLE (403 aa)) are carboxyphosphate synthetic domain. ATP-binding residues include Arg-129, Arg-169, Gly-175, Gly-176, Glu-208, Leu-210, Glu-215, Gly-241, Ile-242, His-243, Gln-285, and Glu-299. In terms of domain architecture, ATP-grasp 1 spans 133 to 328 (DKAMKSIGLE…IAKIAAKLAV (196 aa)). Mg(2+)-binding residues include Gln-285, Glu-299, and Asn-301. Mn(2+) is bound by residues Gln-285, Glu-299, and Asn-301. The interval 404–553 (VGATGFDEMV…YSSYDDECEA (150 aa)) is oligomerization domain. Positions 554-935 (NPTDKEKIMV…AYAKAELGCG (382 aa)) are carbamoyl phosphate synthetic domain. An ATP-grasp 2 domain is found at 678–869 (QQAVDRLGLL…LAKIAARVMA (192 aa)). ATP-binding residues include Arg-714, Arg-753, Leu-755, Glu-760, Gly-785, Val-786, His-787, Ser-788, Gln-828, and Glu-840. Positions 828, 840, and 842 each coordinate Mg(2+). Mn(2+)-binding residues include Gln-828, Glu-840, and Asn-842. Residues 936 to 1077 (NVYPEGGRAL…HAQVQASLKA (142 aa)) enclose the MGS-like domain. The interval 936–1077 (NVYPEGGRAL…HAQVQASLKA (142 aa)) is allosteric domain.

Belongs to the CarB family. As to quaternary structure, composed of two chains; the small (or glutamine) chain promotes the hydrolysis of glutamine to ammonia, which is used by the large (or ammonia) chain to synthesize carbamoyl phosphate. Tetramer of heterodimers (alpha,beta)4. The cofactor is Mg(2+). Mn(2+) is required as a cofactor.

It carries out the reaction hydrogencarbonate + L-glutamine + 2 ATP + H2O = carbamoyl phosphate + L-glutamate + 2 ADP + phosphate + 2 H(+). The enzyme catalyses hydrogencarbonate + NH4(+) + 2 ATP = carbamoyl phosphate + 2 ADP + phosphate + 2 H(+). It participates in amino-acid biosynthesis; L-arginine biosynthesis; carbamoyl phosphate from bicarbonate: step 1/1. The protein operates within pyrimidine metabolism; UMP biosynthesis via de novo pathway; (S)-dihydroorotate from bicarbonate: step 1/3. Large subunit of the glutamine-dependent carbamoyl phosphate synthetase (CPSase). CPSase catalyzes the formation of carbamoyl phosphate from the ammonia moiety of glutamine, carbonate, and phosphate donated by ATP, constituting the first step of 2 biosynthetic pathways, one leading to arginine and/or urea and the other to pyrimidine nucleotides. The large subunit (synthetase) binds the substrates ammonia (free or transferred from glutamine from the small subunit), hydrogencarbonate and ATP and carries out an ATP-coupled ligase reaction, activating hydrogencarbonate by forming carboxy phosphate which reacts with ammonia to form carbamoyl phosphate. The chain is Carbamoyl phosphate synthase large chain from Vibrio vulnificus (strain CMCP6).